Reading from the N-terminus, the 379-residue chain is Leukocyte elastase inhibitor A (379 aa).

Position 300 is a phosphoserine (S300).

The protein belongs to the serpin family. Ov-serpin subfamily. As to quaternary structure, monomer.

Its subcellular location is the secreted. The protein localises to the cytoplasm. It is found in the cytolytic granule. The protein resides in the early endosome. Regulates the activity of the neutrophil proteases. The sequence is that of Leukocyte elastase inhibitor A (Serpinb1a) from Rattus norvegicus (Rat).